The following is a 451-amino-acid chain: Phosphoglucosamine mutase (451 aa).

Catalysis depends on S102, which acts as the Phosphoserine intermediate. Positions 102, 243, 245, and 247 each coordinate Mg(2+). S102 is subject to Phosphoserine.

Belongs to the phosphohexose mutase family. Mg(2+) serves as cofactor. Post-translationally, activated by phosphorylation.

The enzyme catalyses alpha-D-glucosamine 1-phosphate = D-glucosamine 6-phosphate. In terms of biological role, catalyzes the conversion of glucosamine-6-phosphate to glucosamine-1-phosphate. This chain is Phosphoglucosamine mutase, found in Salinispora tropica (strain ATCC BAA-916 / DSM 44818 / JCM 13857 / NBRC 105044 / CNB-440).